Here is a 98-residue protein sequence, read N- to C-terminus: Small ribosomal subunit protein uS19 (98 aa).

Disordered stretches follow at residues 1–30 (MARS…KKSV) and 78–98 (RTFH…PAKK). Over residues 9-24 (PFADKHLTKKVEDANK) the composition is skewed to basic and acidic residues.

The protein belongs to the universal ribosomal protein uS19 family.

In terms of biological role, protein S19 forms a complex with S13 that binds strongly to the 16S ribosomal RNA. This is Small ribosomal subunit protein uS19 from Anaeromyxobacter dehalogenans (strain 2CP-1 / ATCC BAA-258).